The primary structure comprises 197 residues: dITP/XTP pyrophosphatase (197 aa).

11–16 serves as a coordination point for substrate; the sequence is SHNAGK. Residues Glu42 and Asp71 each contribute to the Mg(2+) site. The active-site Proton acceptor is Asp71. Substrate-binding positions include Ser72, 155–158, Lys178, and 183–184; these read FGYD and HR.

It belongs to the HAM1 NTPase family. In terms of assembly, homodimer. Mg(2+) serves as cofactor.

It catalyses the reaction XTP + H2O = XMP + diphosphate + H(+). The catalysed reaction is dITP + H2O = dIMP + diphosphate + H(+). It carries out the reaction ITP + H2O = IMP + diphosphate + H(+). In terms of biological role, pyrophosphatase that catalyzes the hydrolysis of nucleoside triphosphates to their monophosphate derivatives, with a high preference for the non-canonical purine nucleotides XTP (xanthosine triphosphate), dITP (deoxyinosine triphosphate) and ITP. Seems to function as a house-cleaning enzyme that removes non-canonical purine nucleotides from the nucleotide pool, thus preventing their incorporation into DNA/RNA and avoiding chromosomal lesions. In Pseudomonas aeruginosa (strain ATCC 15692 / DSM 22644 / CIP 104116 / JCM 14847 / LMG 12228 / 1C / PRS 101 / PAO1), this protein is dITP/XTP pyrophosphatase.